The primary structure comprises 740 residues: MSSAVRVVEKQLDEILAIARNPAQIRNAGTLAHVDHGKTTTSDSLLMGAGLLSPKVAGKALAMDYVPIEQLRQMTVKAANISLYFEYGGKPYLINFVDTPGHVDFTGHVTRSLRVMDGGLVVVDAVEGVMTQTETVVRQALEEYVRPVLFINKIDRLIKELRLSPQEIQQRILTIVKDFNALIDMFAPPEFKDKWKVDPGKGQMAMGSALHKWGITIPMAQKAGIKFSNIVDAYEKGYVDQLAQEFPLYKTLLTMIIEHVPPPNVAQKYRIPRLWRGDLNSEIGKALLEADPNGPTVIAVSKVNKDPHAGLIATGRVFSGTIREGDEIYIIGRKMKKKVLQTYIYMGPSRIIVPYMPAGNIVALMGVDEARAGDTLVDPRLSEIPPFEKMRYISEPVVTVAIEPKNPAELARLVEALKDLVIEDPTLDLKIDQETGQILLSGVGTLHLEIATWLLKERTKTEFTVSPPLIRFRETVRERSQVWEGKSPNKHNRLYFYVEPLDETTIELIATREITEDQDPRERAKILREKAGWDADEARGIWAIDDRFFNLIVDRTSGIQYLREIRDYIVQGFRWATEAGPLAQEPMRGLKVVLTDAVVHEDPAHRGPAQIMPATKNAIFAAVLSARPTILEPLMKLDIKVAPDYIGAVTSVLNKHRGKILDMTQQEYMAYLRAELPVLESFTISDELRAAAAGKIFWSMQFSRWAPMPESILADMVKQLRKKKGLKEEIPKPTDFVEAF.

Residues 23 to 264 (AQIRNAGTLA…MIIEHVPPPN (242 aa)) enclose the tr-type G domain. GTP is bound by residues 32–39 (AHVDHGKT), 98–102 (DTPGH), and 152–155 (NKID). At His-605 the chain carries Diphthamide.

This sequence belongs to the TRAFAC class translation factor GTPase superfamily. Classic translation factor GTPase family. EF-G/EF-2 subfamily.

It localises to the cytoplasm. In terms of biological role, catalyzes the GTP-dependent ribosomal translocation step during translation elongation. During this step, the ribosome changes from the pre-translocational (PRE) to the post-translocational (POST) state as the newly formed A-site-bound peptidyl-tRNA and P-site-bound deacylated tRNA move to the P and E sites, respectively. Catalyzes the coordinated movement of the two tRNA molecules, the mRNA and conformational changes in the ribosome. This Pyrobaculum neutrophilum (strain DSM 2338 / JCM 9278 / NBRC 100436 / V24Sta) (Thermoproteus neutrophilus) protein is Elongation factor 2.